Here is a 966-residue protein sequence, read N- to C-terminus: Aminopeptidase N (966 aa).

Topologically, residues 1–8 (MAKGFYIS) are cytoplasmic. Residues 9–32 (KTLGILGILLGVAAVCTIIALSVV) form a helical; Signal-anchor for type II membrane protein membrane-spanning segment. The cytosolic Ser/Thr-rich junction stretch occupies residues 33–68 (YAQEKNRNAENSATAPTLPGSTSATTATTTPAVDES). Residues 33–966 (YAQEKNRNAE…VFKWFTENSS (934 aa)) lie on the Extracellular side of the membrane. The disordered stretch occupies residues 42-64 (ENSATAPTLPGSTSATTATTTPA). Residues 44–64 (SATAPTLPGSTSATTATTTPA) show a composition bias toward low complexity. Residues 69–966 (KPWNQYRLPK…VFKWFTENSS (898 aa)) form a metalloprotease region. Asn-106, Asn-114, and Asn-128 each carry an N-linked (GlcNAc...) asparagine glycan. At Tyr-176 the chain carries Sulfotyrosine. N-linked (GlcNAc...) asparagine glycans are attached at residues Asn-234, Asn-288, Asn-318, and Asn-332. Residue 351–355 (GAMEN) participates in substrate binding. Zn(2+) is bound at residue His-387. The active-site Proton acceptor is the Glu-388. Residues His-391 and Glu-410 each coordinate Zn(2+). Residues Tyr-418 and Tyr-423 each carry the sulfotyrosine modification. N-linked (GlcNAc...) asparagine glycosylation is found at Asn-573, Asn-606, Asn-624, and Asn-734. Cys-760 and Cys-767 are oxidised to a cystine. Asn-784 and Asn-817 each carry an N-linked (GlcNAc...) asparagine glycan. Cysteines 797 and 833 form a disulfide. Tyr-852 is subject to Phosphotyrosine.

This sequence belongs to the peptidase M1 family. In terms of assembly, homodimer. Interacts with SLC6A19. Zn(2+) is required as a cofactor. In terms of processing, N- and O-glycosylated. Post-translationally, sulfated. May undergo proteolysis and give rise to a soluble form. Expressed in the intestinal brush border (at protein level). Highly expressed in intestinal tract and kidney, present in liver, lymph node, spleen, and brain. Found as well in monocytes, macrophages, dendritic cells, veiled cells and B-cells but not on T-cells and thymocytes.

The protein resides in the cell membrane. It catalyses the reaction Release of an N-terminal amino acid, Xaa-|-Yaa- from a peptide, amide or arylamide. Xaa is preferably Ala, but may be most amino acids including Pro (slow action). When a terminal hydrophobic residue is followed by a prolyl residue, the two may be released as an intact Xaa-Pro dipeptide.. Its function is as follows. Broad specificity aminopeptidase which plays a role in the final digestion of peptides generated from hydrolysis of proteins by gastric and pancreatic proteases. Also involved in the processing of various peptides including peptide hormones, such as angiotensin III and IV, neuropeptides, and chemokines. May also be involved the cleavage of peptides bound to major histocompatibility complex class II molecules of antigen presenting cells. May have a role in angiogenesis and promote cholesterol crystallization. May have a role in amino acid transport by acting as binding partner of amino acid transporter SLC6A19 and regulating its activity. This chain is Aminopeptidase N (Anpep), found in Mus musculus (Mouse).